The following is a 295-amino-acid chain: MEIRRRPPNPSIKVANLEYAIPHPDSKPKNILEEIVWEKHLEVEIARKKVSLEDLKKKIKDLPKTKNFIDALRNSNSKPALISEIKKASPSRGIIREDFDAKMIGKMYQEGGANCISVLTDKKFFQGGFDVLVEVRKEIIIPILCKDFILYPYQLYQARAAGADAALLIAAILTDSDLKYLSKVAEHLGLTILVEVHDSEELERVLNINVFNLIGINNRNLKSFKTDLEVTKKLAKNYANQIKENSITLVSESGLFNREDLDLVKSYGADAVLVGESLMSQEDILGGVKKLVGNL.

The protein belongs to the TrpC family.

It carries out the reaction 1-(2-carboxyphenylamino)-1-deoxy-D-ribulose 5-phosphate + H(+) = (1S,2R)-1-C-(indol-3-yl)glycerol 3-phosphate + CO2 + H2O. The protein operates within amino-acid biosynthesis; L-tryptophan biosynthesis; L-tryptophan from chorismate: step 4/5. This is Indole-3-glycerol phosphate synthase from Prochlorococcus marinus (strain NATL1A).